A 296-amino-acid chain; its full sequence is Probable porphobilinogen deaminase (296 aa).

Position 241 is an S-(dipyrrolylmethanemethyl)cysteine (Cys241).

This sequence belongs to the HMBS family. The cofactor is dipyrromethane.

It catalyses the reaction 4 porphobilinogen + H2O = hydroxymethylbilane + 4 NH4(+). It functions in the pathway porphyrin-containing compound metabolism; protoporphyrin-IX biosynthesis; coproporphyrinogen-III from 5-aminolevulinate: step 2/4. Its function is as follows. Tetrapolymerization of the monopyrrole PBG into the hydroxymethylbilane pre-uroporphyrinogen in several discrete steps. This Pyrobaculum calidifontis (strain DSM 21063 / JCM 11548 / VA1) protein is Probable porphobilinogen deaminase.